Here is a 569-residue protein sequence, read N- to C-terminus: Proline--tRNA ligase (569 aa).

Belongs to the class-II aminoacyl-tRNA synthetase family. ProS type 1 subfamily. As to quaternary structure, homodimer.

It is found in the cytoplasm. It carries out the reaction tRNA(Pro) + L-proline + ATP = L-prolyl-tRNA(Pro) + AMP + diphosphate. Its function is as follows. Catalyzes the attachment of proline to tRNA(Pro) in a two-step reaction: proline is first activated by ATP to form Pro-AMP and then transferred to the acceptor end of tRNA(Pro). As ProRS can inadvertently accommodate and process non-cognate amino acids such as alanine and cysteine, to avoid such errors it has two additional distinct editing activities against alanine. One activity is designated as 'pretransfer' editing and involves the tRNA(Pro)-independent hydrolysis of activated Ala-AMP. The other activity is designated 'posttransfer' editing and involves deacylation of mischarged Ala-tRNA(Pro). The misacylated Cys-tRNA(Pro) is not edited by ProRS. The protein is Proline--tRNA ligase of Dehalococcoides mccartyi (strain ATCC BAA-2100 / JCM 16839 / KCTC 5957 / BAV1).